The primary structure comprises 160 residues: H/ACA ribonucleoprotein complex subunit 2-like protein (160 aa).

This sequence belongs to the eukaryotic ribosomal protein eL8 family. As to quaternary structure, component of the small nucleolar ribonucleoprotein particle containing H/ACA-type snoRNAs (H/ACA snoRNPs).

It is found in the nucleus. It localises to the nucleolus. Its function is as follows. Required for ribosome biogenesis. Part of a complex which catalyzes pseudouridylation of rRNA. This involves the isomerization of uridine such that the ribose is subsequently attached to C5, instead of the normal N1. Pseudouridine ('psi') residues may serve to stabilize the conformation of rRNAs. The chain is H/ACA ribonucleoprotein complex subunit 2-like protein (NHP2) from Drosophila yakuba (Fruit fly).